Consider the following 438-residue polypeptide: MASVVADLPSYGPIAFDQVDNNTNATQLFKNNINKTRMNDLNREETRLKTFTDWPLDWLDKRQLAQTGMYFTHAGDKVKCFFCGVEIGCWEQEDQPVPEHQRWSPNCPLLRRRTTNNVPINAEALDRILPPISYDICGANDSTLEMREHAYAEGVIPMSQLIQSIGMNAVNAAGSVTGTAAPQPRVTVATHASTATQATGDVQPETCRPSAASGNYFPQYPEYAIETARLRTFEAWPRNLKQKPHQLAEAGFFYTGVGDRVRCFSCGGGLMDWNDNDEPWEQHALWLSQCRFVKLMKGQLYIDTVAAKPVLAEEKEESSSIGGVAVASTQASEEEQQTSLSSEEAVSGDVAPSVAPTAATRIFNKIVEATAVATPSTNSSGSTSIPEEKLCKICYGAEYNTAFLPCGHVVACAKCASSVTKCPLCRKPFTDVMRVYFS.

The stretch at 44 to 110 (EETRLKTFTD…QRWSPNCPLL (67 aa)) is one BIR 1 repeat. Residues 194–213 (TATQATGDVQPETCRPSAAS) are disordered. Residues 226–293 (ETARLRTFEA…ALWLSQCRFV (68 aa)) form a BIR 2 repeat. Positions 263, 266, 283, and 290 each coordinate Zn(2+). The tract at residues 322-346 (GGVAVASTQASEEEQQTSLSSEEAV) is disordered. Residues 327–345 (ASTQASEEEQQTSLSSEEA) are compositionally biased toward low complexity. The RING-type zinc-finger motif lies at 391–426 (CKICYGAEYNTAFLPCGHVVACAKCASSVTKCPLCR).

This sequence belongs to the IAP family. As to quaternary structure, interacts (via BIR 2 domain) with Dronc (via residues 114-125). Rpr, hid and grim can outcompete Dronc for binding Diap1 therefore removing Diap1-mediated ubiquitination. Interacts (via BIR 2 domain) with HtrA2; this displaces any bound Dronc. Interacts with Strica. The N-terminally cleaved form interacts with Ubr3 (via UBR-type zinc finger); the interaction promotes the recruitment and uniquitination of substrate capases such as Dronc. In terms of processing, ubiquitinated and degraded by HtrA2 in apoptotic cells; proteolytic cleavage at specific sites in the BIR domain linker region generating inactive fragments. Mutation of one site reduces but does not abolish cleavage as another site is selected by the protease.

It carries out the reaction S-ubiquitinyl-[E2 ubiquitin-conjugating enzyme]-L-cysteine + [acceptor protein]-L-lysine = [E2 ubiquitin-conjugating enzyme]-L-cysteine + N(6)-ubiquitinyl-[acceptor protein]-L-lysine.. Anti-apoptotic protein which functions as a caspase regulator, using its E3 ubiquitin-protein ligase activity to smother caspase activity. Binds, ubiquitinates and inactivates initiator caspase Dronc, and effector caspases Drice and Dcp-1. Acts as a Nedd8-E3 ubiquitin-protein ligase for Drice. Suppresses apoptosis by targeting the apoptosome for ubiquitination and inactivation. Plays an important role in cell motility. Overexpression suppresses rpr and hid-dependent cell death in the eye. Interaction of Diap1 with Dronc is required to suppress Dronc-mediated cell death through Diap1-mediated ubiquitination of Dronc. Acts as a positive regulator of Wnt signaling. The chain is Death-associated inhibitor of apoptosis 1 (Diap1) from Drosophila melanogaster (Fruit fly).